The chain runs to 241 residues: DnaJ homolog subfamily C member 4 (241 aa).

A J domain is found at 34 to 99; that stretch reads TYYELLGVHP…QSRRSYDDQL (66 aa). Positions 88-99 are enriched in basic and acidic residues; the sequence is REQSRRSYDDQL. The interval 88–129 is disordered; it reads REQSRRSYDDQLRSGSPPKSPRTTVHDKSAHQTHSSWTPPNA. Polar residues predominate over residues 119–129; sequence QTHSSWTPPNA. The helical transmembrane segment at 156–175 threads the bilayer; it reads VLGYCLLLMLAGMGLHYIAF. The disordered stretch occupies residues 212–241; that stretch reads QQERQRLGQRQPPPSEPTQGPEIVPRGAGP.

The protein resides in the membrane. This is DnaJ homolog subfamily C member 4 (DNAJC4) from Homo sapiens (Human).